A 213-amino-acid chain; its full sequence is Large ribosomal subunit protein uL1 (213 aa).

This sequence belongs to the universal ribosomal protein uL1 family. As to quaternary structure, part of the 50S ribosomal subunit.

In terms of biological role, binds directly to 23S rRNA. Probably involved in E site tRNA release. Protein L1 is also a translational repressor protein, it controls the translation of its operon by binding to its mRNA. This Nanoarchaeum equitans (strain Kin4-M) protein is Large ribosomal subunit protein uL1.